Consider the following 227-residue polypeptide: 2,3-bisphosphoglycerate-dependent phosphoglycerate mutase (227 aa).

Residues 7–14 (RHGFSEWN), 20–21 (TG), Arg-59, 86–89 (ERHY), Lys-97, 113–114 (RR), and 182–183 (GN) contribute to the substrate site. The active-site Tele-phosphohistidine intermediate is His-8. Catalysis depends on Glu-86, which acts as the Proton donor/acceptor.

Belongs to the phosphoglycerate mutase family. BPG-dependent PGAM subfamily. Homodimer.

It carries out the reaction (2R)-2-phosphoglycerate = (2R)-3-phosphoglycerate. It functions in the pathway carbohydrate degradation; glycolysis; pyruvate from D-glyceraldehyde 3-phosphate: step 3/5. In terms of biological role, catalyzes the interconversion of 2-phosphoglycerate and 3-phosphoglycerate. This Haemophilus influenzae (strain ATCC 51907 / DSM 11121 / KW20 / Rd) protein is 2,3-bisphosphoglycerate-dependent phosphoglycerate mutase.